A 537-amino-acid chain; its full sequence is Glutamyl-tRNA(Gln) amidotransferase subunit A, chloroplastic/mitochondrial (537 aa).

Active-site charge relay system residues include Lys-116 and Ser-191. Ser-215 functions as the Acyl-ester intermediate in the catalytic mechanism.

The protein belongs to the amidase family. GatA subfamily. As to quaternary structure, subunit of the heterotrimeric GatCAB amidotransferase (AdT) complex, composed of A, B and C subunits.

It is found in the mitochondrion. It localises to the plastid. The protein resides in the chloroplast stroma. The enzyme catalyses L-glutamyl-tRNA(Gln) + L-glutamine + ATP + H2O = L-glutaminyl-tRNA(Gln) + L-glutamate + ADP + phosphate + H(+). In terms of biological role, allows the formation of correctly charged Gln-tRNA(Gln) through the transamidation of misacylated Glu-tRNA(Gln) in chloroplasts and mitochondria. The reaction takes place in the presence of glutamine and ATP through an activated gamma-phospho-Glu-tRNA(Gln). This Arabidopsis thaliana (Mouse-ear cress) protein is Glutamyl-tRNA(Gln) amidotransferase subunit A, chloroplastic/mitochondrial.